Here is a 298-residue protein sequence, read N- to C-terminus: Nucleotide-binding protein Csal_2229 (298 aa).

8-15 (GRSGSGKS) provides a ligand contact to ATP. Residue 59–62 (DARN) participates in GTP binding.

The protein belongs to the RapZ-like family.

In terms of biological role, displays ATPase and GTPase activities. This Chromohalobacter salexigens (strain ATCC BAA-138 / DSM 3043 / CIP 106854 / NCIMB 13768 / 1H11) protein is Nucleotide-binding protein Csal_2229.